The primary structure comprises 130 residues: MSATQNYGTGRRKTATARVFLRPGTGKISINNRELDNFFGRETARMVVRQPLELTETAEKFDIYVTVLGGGVSGQAGAIRHGITRALISYDESLRSPLRKAGFVTRDAREVERKKVGLRKARKRPQYSKR.

This sequence belongs to the universal ribosomal protein uS9 family.

The chain is Small ribosomal subunit protein uS9 from Stutzerimonas stutzeri (strain A1501) (Pseudomonas stutzeri).